A 482-amino-acid polypeptide reads, in one-letter code: Butyrophilin-like protein 2 (482 aa).

At 1-6 (MVDFPG) the chain is on the cytoplasmic side. The chain crosses the membrane as a helical; Signal-anchor for type II membrane protein span at residues 7 to 23 (YNLSGAVASFLFILLTM). Residues 24–482 (KQSEDFRVIG…VAVGLPRKRS (459 aa)) lie on the Extracellular side of the membrane. 3 Ig-like V-type domains span residues 29-140 (FRVI…LLLK), 142-234 (AGLG…SVIS), and 236-355 (PEKL…ASLD). 3 cysteine pairs are disulfide-bonded: C50-C124, C164-C218, and C267-C341. N-linked (GlcNAc...) asparagine glycosylation occurs at N210. Residue N427 is glycosylated (N-linked (GlcNAc...) asparagine).

This sequence belongs to the immunoglobulin superfamily. BTN/MOG family. Expressed in brain, heart, kidney, liver, pancreas, ovary, leukocyte, small intestine, testis and thymus.

The protein localises to the membrane. Negative regulator of T-cell proliferation. The polypeptide is Butyrophilin-like protein 2 (Homo sapiens (Human)).